The following is a 116-amino-acid chain: Protein Wnt-5a (116 aa).

Ser-1 carries O-palmitoleoyl serine; by PORCN lipidation. 2 N-linked (GlcNAc...) asparagine glycosylation sites follow: Asn-69 and Asn-83. A disulfide bridge connects residues Cys-82 and Cys-97.

Belongs to the Wnt family. Palmitoleoylation is required for efficient binding to frizzled receptors. Depalmitoleoylation leads to Wnt signaling pathway inhibition.

The protein resides in the secreted. The protein localises to the extracellular space. It is found in the extracellular matrix. Functionally, ligand for members of the frizzled family of seven transmembrane receptors. Can activate or inhibit canonical Wnt signaling, depending on receptor context. Required during embryogenesis for extension of the primary anterior-posterior axis. The protein is Protein Wnt-5a (WNT-5A) of Plestiodon skiltonianus (Western skink).